The primary structure comprises 476 residues: WD repeat, SAM and U-box domain-containing protein 1 (476 aa).

WD repeat units lie at residues 10-47 (DHGD…ELPH), 52-91 (FHTY…MLAV), 95-134 (PSGS…LYRC), 137-176 (VKDG…LHSE), 178-228 (AHDL…LGFE), 237-276 (GHCA…ILHT), and 279-318 (QHTR…LCQA). The region spanning 332-396 (WSEEDVSTWL…LRKIEELRTK (65 aa)) is the SAM domain. The U-box domain maps to 403–476 (GIPDEFICPI…INRWLETHQK (74 aa)). Position 458 is a phosphothreonine (T458).

The sequence is that of WD repeat, SAM and U-box domain-containing protein 1 (WDSUB1) from Homo sapiens (Human).